Reading from the N-terminus, the 427-residue chain is Putative dipeptidase MCYG_02918 (427 aa).

Positions 1–29 are cleaved as a signal peptide; that stretch reads MAPERRSRLSDAGILVSLLALTSLVPVQA. Residues H55, D57, and E167 each coordinate Zn(2+). Residues C106 and C196 are joined by a disulfide bond. H194 contributes to the substrate binding site. Residues H238 and H259 each coordinate Zn(2+). 2 residues coordinate substrate: R270 and D330. N-linked (GlcNAc...) asparagine glycosylation is present at N402.

This sequence belongs to the metallo-dependent hydrolases superfamily. Peptidase M19 family. Requires Zn(2+) as cofactor.

It carries out the reaction an L-aminoacyl-L-amino acid + H2O = 2 an L-alpha-amino acid. In terms of biological role, hydrolyzes a wide range of dipeptides. In Arthroderma otae (strain ATCC MYA-4605 / CBS 113480) (Microsporum canis), this protein is Putative dipeptidase MCYG_02918.